The sequence spans 299 residues: Undecaprenyl-diphosphatase (299 aa).

8 consecutive transmembrane segments (helical) span residues 10-32, 63-83, 112-132, 143-163, 178-198, 213-233, 243-263, and 276-296; these read LFSLMILLAATSELLAACWRNLV, PGVSATAVIQLGSILAVIAYF, LAIAIGTMPILLAGMAIKLFW, LPSIAVVSIVMALLLALAESF, GFVVGLAQALALIPGVSRSGS, AARFCFLLGIPAITLAGLVEL, GGVLPLLVGIVSAAFVSWLAI, and WIFVVYRLLFGVLVLAWWLSG.

It belongs to the UppP family.

It localises to the cell inner membrane. The enzyme catalyses di-trans,octa-cis-undecaprenyl diphosphate + H2O = di-trans,octa-cis-undecaprenyl phosphate + phosphate + H(+). Functionally, catalyzes the dephosphorylation of undecaprenyl diphosphate (UPP). Confers resistance to bacitracin. This chain is Undecaprenyl-diphosphatase, found in Prochlorococcus marinus (strain MIT 9313).